The sequence spans 151 residues: UPF0208 membrane protein YPDSF_1972 (151 aa).

Helical transmembrane passes span 46–66 (FGIR…IALG) and 69–89 (LGPA…GLWW).

This sequence belongs to the UPF0208 family.

It is found in the cell inner membrane. This chain is UPF0208 membrane protein YPDSF_1972, found in Yersinia pestis (strain Pestoides F).